Reading from the N-terminus, the 539-residue chain is Phosphatidylinositol 4-phosphate 5-kinase type-1 beta (539 aa).

The interval methionine 1–tyrosine 21 is disordered. The region spanning alanine 25–valine 395 is the PIPK domain. 3 positions are modified to phosphoserine: serine 445, serine 447, and serine 448.

Interacts with RAC1, AJUBA, PLD1, PLD2 and ARF1.

The protein localises to the cytoplasm. Its subcellular location is the cytosol. The protein resides in the cell membrane. It is found in the endomembrane system. It catalyses the reaction a 1,2-diacyl-sn-glycero-3-phospho-(1D-myo-inositol 4-phosphate) + ATP = a 1,2-diacyl-sn-glycero-3-phospho-(1D-myo-inositol-4,5-bisphosphate) + ADP + H(+). It carries out the reaction 1-octadecanoyl-2-(5Z,8Z,11Z,14Z)-eicosatetraenoyl-sn-glycero-3-phospho-1D-myo-inositol 4-phosphate + ATP = 1-octadecanoyl-2-(5Z,8Z,11Z,14Z)-eicosatetraenoyl-sn-glycero-3-phospho-1D-myo-inositol 4,5-bisphosphate + ADP + H(+). The enzyme catalyses 1-octadecanoyl-2-(9Z)-octadecenoyl-sn-glycero-3-phospho-1D-myo-inositol 4-phosphate + ATP = 1-octadecanoyl-2-(9Z)-octadecenoyl-sn-glycero-3-phospho-1D-myo-inositol 4,5-bisphosphate + ADP + H(+). The catalysed reaction is 1-octadecanoyl-2-(9Z)-octadecenoyl-sn-glycero-3-phospho-1D-myo-inositol + ATP = 1-octadecanoyl-2-(9Z)-octadecenoyl-sn-glycero-3-phospho-1D-myo-inositol 5-phosphate + ADP + H(+). It catalyses the reaction 1-octadecanoyl-2-(9Z,12Z)-octadecadienoyl-sn-glycero-3-phospho-1D-myo-inositol + ATP = 1-octadecanoyl-2-(9Z,12Z)-octadecadienoyl-sn-glycero-3-phospho-1D-myo-inositol 5-phosphate + ADP + H(+). It carries out the reaction 1-octadecanoyl-2-(5Z,8Z,11Z,14Z-eicosatetraenoyl)-sn-glycero-3-phospho-(1D-myo-inositol) + ATP = 1-octadecanoyl-2-(5Z,8Z,11Z,14Z)-eicosatetraenoyl-sn-glycero-3-phospho-1D-myo-inositol 5-phosphate + ADP + H(+). The enzyme catalyses 1,2-di-(9Z,12Z)-octadecadienoyl-sn-glycero-3-phospho-1D-myo-inositol + ATP = 1,2-di(9Z,12Z)-octadecadienoyl-sn-glycero-3-phospho-1D-myo-inositol 5-phosphate + ADP + H(+). Functionally, catalyzes the phosphorylation of phosphatidylinositol 4-phosphate (PtdIns(4)P/PI4P) to form phosphatidylinositol 4,5-bisphosphate (PtdIns(4,5)P2/PIP2), a lipid second messenger that regulates several cellular processes such as signal transduction, vesicle trafficking, actin cytoskeleton dynamics, cell adhesion, and cell motility. PtdIns(4,5)P2 can directly act as a second messenger or can be utilized as a precursor to generate other second messengers: inositol 1,4,5-trisphosphate (IP3), diacylglycerol (DAG) or phosphatidylinositol-3,4,5-trisphosphate (PtdIns(3,4,5)P3/PIP3). Mediates RAC1-dependent reorganization of actin filaments. Contributes to the activation of phospholipase PLD2. Together with PIP5K1A, is required, after stimulation by G-protein coupled receptors, for the synthesis of IP3 that will induce stable platelet adhesion. This chain is Phosphatidylinositol 4-phosphate 5-kinase type-1 beta, found in Rattus norvegicus (Rat).